The following is a 328-amino-acid chain: 7,8-didemethyl-8-hydroxy-5-deazariboflavin synthase (328 aa).

A Radical SAM core domain is found at 1 to 242 (MTYSRNIFIP…PDVSIQVPPN (242 aa)). The [4Fe-4S] cluster site is built by Cys-15, Cys-19, and Cys-22.

It belongs to the radical SAM superfamily. CofG family. As to quaternary structure, consists of two subunits, CofG and CofH. Requires [4Fe-4S] cluster as cofactor.

It catalyses the reaction 5-amino-5-(4-hydroxybenzyl)-6-(D-ribitylimino)-5,6-dihydrouracil + S-adenosyl-L-methionine = 7,8-didemethyl-8-hydroxy-5-deazariboflavin + 5'-deoxyadenosine + L-methionine + NH4(+) + H(+). Its pathway is cofactor biosynthesis; coenzyme F0 biosynthesis. Functionally, catalyzes the radical-mediated synthesis of 7,8-didemethyl-8-hydroxy-5-deazariboflavin from 5-amino-5-(4-hydroxybenzyl)-6-(D-ribitylimino)-5,6-dihydrouracil. The polypeptide is 7,8-didemethyl-8-hydroxy-5-deazariboflavin synthase (Methanothermobacter thermautotrophicus (strain ATCC 29096 / DSM 1053 / JCM 10044 / NBRC 100330 / Delta H) (Methanobacterium thermoautotrophicum)).